The primary structure comprises 153 residues: Cytochrome c-type biogenesis protein CcmE (153 aa).

Topologically, residues 1–8 (MTTRRGRR) are cytoplasmic. The chain crosses the membrane as a helical; Signal-anchor for type II membrane protein span at residues 9–29 (ALLIAGGVGLLALAAALVLNA). Topologically, residues 30-153 (LRSNLVFFFS…PSATLQTEAR (124 aa)) are periplasmic. The heme site is built by His-124 and Tyr-128.

The protein belongs to the CcmE/CycJ family.

The protein resides in the cell inner membrane. Functionally, heme chaperone required for the biogenesis of c-type cytochromes. Transiently binds heme delivered by CcmC and transfers the heme to apo-cytochromes in a process facilitated by CcmF and CcmH. In Bordetella parapertussis (strain 12822 / ATCC BAA-587 / NCTC 13253), this protein is Cytochrome c-type biogenesis protein CcmE.